Consider the following 162-residue polypeptide: Crossover junction endodeoxyribonuclease RuvC (162 aa).

Residues D8, E69, and H141 contribute to the active site. The Mg(2+) site is built by D8, E69, and H141.

Belongs to the RuvC family. Homodimer which binds Holliday junction (HJ) DNA. The HJ becomes 2-fold symmetrical on binding to RuvC with unstacked arms; it has a different conformation from HJ DNA in complex with RuvA. In the full resolvosome a probable DNA-RuvA(4)-RuvB(12)-RuvC(2) complex forms which resolves the HJ. Mg(2+) is required as a cofactor.

The protein resides in the cytoplasm. It catalyses the reaction Endonucleolytic cleavage at a junction such as a reciprocal single-stranded crossover between two homologous DNA duplexes (Holliday junction).. Its function is as follows. The RuvA-RuvB-RuvC complex processes Holliday junction (HJ) DNA during genetic recombination and DNA repair. Endonuclease that resolves HJ intermediates. Cleaves cruciform DNA by making single-stranded nicks across the HJ at symmetrical positions within the homologous arms, yielding a 5'-phosphate and a 3'-hydroxyl group; requires a central core of homology in the junction. The consensus cleavage sequence is 5'-(A/T)TT(C/G)-3'. Cleavage occurs on the 3'-side of the TT dinucleotide at the point of strand exchange. HJ branch migration catalyzed by RuvA-RuvB allows RuvC to scan DNA until it finds its consensus sequence, where it cleaves and resolves the cruciform DNA. This Wolbachia sp. subsp. Drosophila simulans (strain wRi) protein is Crossover junction endodeoxyribonuclease RuvC.